The following is a 628-amino-acid chain: Biosynthetic arginine decarboxylase (628 aa).

K99 is modified (N6-(pyridoxal phosphate)lysine). V279–Y289 lines the substrate pocket.

It belongs to the Orn/Lys/Arg decarboxylase class-II family. SpeA subfamily. The cofactor is Mg(2+). Requires pyridoxal 5'-phosphate as cofactor.

The enzyme catalyses L-arginine + H(+) = agmatine + CO2. Catalyzes the biosynthesis of agmatine from arginine. This is Biosynthetic arginine decarboxylase from Xanthomonas axonopodis pv. citri (strain 306).